The sequence spans 122 residues: Large ribosomal subunit protein uL18 (122 aa).

It belongs to the universal ribosomal protein uL18 family. As to quaternary structure, part of the 50S ribosomal subunit; part of the 5S rRNA/L5/L18/L25 subcomplex. Contacts the 5S and 23S rRNAs.

This is one of the proteins that bind and probably mediate the attachment of the 5S RNA into the large ribosomal subunit, where it forms part of the central protuberance. The polypeptide is Large ribosomal subunit protein uL18 (Mycobacterium tuberculosis (strain ATCC 25177 / H37Ra)).